A 223-amino-acid polypeptide reads, in one-letter code: Neurotrophic factor BDNF precursor form (223 aa).

Positions 1–5 (SCMKA) are cleaved as a signal peptide. Residues 6–114 (APMKEVSIRG…AANMSMRVRR (109 aa)) constitute a propeptide that is removed on maturation. Residue N107 is glycosylated (N-linked (GlcNAc...) asparagine). 2 disulfide bridges follow: C127–C194 and C172–C223.

It belongs to the NGF-beta family.

It is found in the secreted. Promotes the survival of neuronal populations that are all located either in the central nervous system or directly connected to it. This chain is Neurotrophic factor BDNF precursor form (BDNF), found in Eryx johnii (Indian red sand boa).